The primary structure comprises 414 residues: Particulate methane monooxygenase alpha subunit (414 aa).

An N-terminal signal peptide occupies residues 1–32 (MKTIKDRIAKWSAIGLLSAVAATAFYAPSASA). His33, His48, His72, His137, and His139 together coordinate Cu cation. Positions 33 to 172 (HGEKSQAAFM…MSEFRNPVTT (140 aa)) are cupredoxin domain used to construct soluble pmoB (spmoB). The next 2 membrane-spanning stretches (helical) occupy residues 186 to 206 (GNTY…IGYW) and 235 to 255 (VAMG…SSAN). Residues 265-414 (QAGTMRGMKP…IDAPLIPSFM (150 aa)) are cupredoxin domain used to construct soluble pmoB (spmoB).

M.capsulatus has two forms of methane monooxygenase, a soluble (sMMO) and a membrane-bound (particulate) type (pMMO). The particulate type is a nonamer composed of three alpha:beta:gamma heterotrimeric protomers assembled into a cylindrical structure; the beta and gamma subunits comprise the bulk of the membrane-spanning regions and the soluble regions are derived primarily from alpha subunits which form two antiparallel beta-barrel-like structures each. This assembly, also called pMMO hydroxylase (pMMO-H), is proposed to associate with methanol dehydrogenase (MDH), also designated as pMMO-R, to form the pMMO-C complex which seems to have greater methane monooxygenase activity. Cu(2+) is required as a cofactor.

It localises to the membrane. It carries out the reaction methane + a quinol + O2 = methanol + a quinone + H2O. Functionally, methane monooxygenase is responsible for the initial oxygenation of methane to methanol in methanotrophs. At least in vitro, specific quinols can replace NADH as reductants. The chain is Particulate methane monooxygenase alpha subunit (pmoB1) from Methylococcus capsulatus (strain ATCC 33009 / NCIMB 11132 / Bath).